The sequence spans 83 residues: Protein kreg-1 (83 aa).

Residues 62 to 83 are disordered; the sequence is GHHHHHHGHHFGHHHHHHHGHH.

As to expression, weakly expressed in the intestine, but expression is up-regulated in response to Cu(2+).

Functionally, plays a role in the stress response to heavy metals such as copper, probably in a fos-1/kgb-1-dependent manner. The chain is Protein kreg-1 from Caenorhabditis elegans.